A 138-amino-acid polypeptide reads, in one-letter code: 1,4-dihydroxy-2-naphthoyl-CoA hydrolase (138 aa).

The active site involves Asp-15.

This sequence belongs to the 4-hydroxybenzoyl-CoA thioesterase family. DHNA-CoA hydrolase subfamily.

It catalyses the reaction 1,4-dihydroxy-2-naphthoyl-CoA + H2O = 1,4-dihydroxy-2-naphthoate + CoA + H(+). Its pathway is cofactor biosynthesis; phylloquinone biosynthesis. The protein operates within quinol/quinone metabolism; 1,4-dihydroxy-2-naphthoate biosynthesis; 1,4-dihydroxy-2-naphthoate from chorismate: step 7/7. Functionally, catalyzes the hydrolysis of 1,4-dihydroxy-2-naphthoyl-CoA (DHNA-CoA) to 1,4-dihydroxy-2-naphthoate (DHNA), a reaction involved in phylloquinone (vitamin K1) biosynthesis. This Trichodesmium erythraeum (strain IMS101) protein is 1,4-dihydroxy-2-naphthoyl-CoA hydrolase.